We begin with the raw amino-acid sequence, 319 residues long: MYNKTVSINLDSRCNASCDHCCFSSSPTSTTRMEKEYIRELVTEFAKNKTIQVISFTGGEVFLDYKFLKELMEIIKPYEKQITLISNGFWGLSKKKVQEYFHDMNSLNVIALTISYDEYHAPFVKSSSIKNILEHSRKYPDIDISLNMAVTKDKMSNHILEELGDSILGVKITKFPMISVGAAKTRIKQENIHKFYSLEDEDSLHCPGYDIVYHHDGEIYPCCSPAIFETKITLREEYNQSFERTVEKLNSNLLLFILRKEGFKWFLNILKENNKIEEFDIPYEFSSICGVCGSLFNSAEKINYFYPYMEKYYNENFKV.

The Radical SAM core domain maps to 1 to 214 (MYNKTVSINL…HCPGYDIVYH (214 aa)). Cys-14, Cys-18, and Cys-21 together coordinate [4Fe-4S] cluster.

[4Fe-4S] cluster is required as a cofactor.

In terms of biological role, required for production of the modified peptide YydF. May activate a metalloenzyme (Potential). The polypeptide is Putative peptide biosynthesis protein YydG (yydG) (Bacillus subtilis (strain 168)).